A 130-amino-acid polypeptide reads, in one-letter code: Galectin-2 (130 aa).

A Galectin domain is found at 4 to 130 (KFEVKDLNMK…GLQISSFKLE (127 aa)). 65–71 (WGQEQRE) contacts a beta-D-galactoside.

As to quaternary structure, homodimer.

Its function is as follows. This protein binds beta-galactoside. Its physiological function is not yet known. In Mus musculus (Mouse), this protein is Galectin-2 (Lgals2).